Reading from the N-terminus, the 257-residue chain is Acetylglutamate kinase (257 aa).

Substrate-binding positions include 43 to 44, Arg-65, and Asn-157; that span reads GG. Residues 180 to 185 and 208 to 210 each bind ATP; these read DVSGIL and IIT.

It belongs to the acetylglutamate kinase family. ArgB subfamily. As to quaternary structure, homodimer.

Its subcellular location is the cytoplasm. The catalysed reaction is N-acetyl-L-glutamate + ATP = N-acetyl-L-glutamyl 5-phosphate + ADP. It functions in the pathway amino-acid biosynthesis; L-arginine biosynthesis; N(2)-acetyl-L-ornithine from L-glutamate: step 2/4. Functionally, catalyzes the ATP-dependent phosphorylation of N-acetyl-L-glutamate. The polypeptide is Acetylglutamate kinase (Edwardsiella ictaluri (strain 93-146)).